The following is a 493-amino-acid chain: Membrane-bound lytic murein transglycosylase F (493 aa).

Positions 1-21 are cleaved as a signal peptide; it reads MKRLRFNYLLIGLITVLLALA. The segment at 22–268 is non-LT domain; it reads LWPSIPWYGG…RLDEKYLGHV (247 aa). An LT domain region spans residues 269-493; it reads GTFDYVDTRT…LNPVSALPLP (225 aa). Glu313 is an active-site residue.

This sequence in the N-terminal section; belongs to the bacterial solute-binding protein 3 family. The protein in the C-terminal section; belongs to the transglycosylase Slt family.

The protein localises to the cell outer membrane. The catalysed reaction is Exolytic cleavage of the (1-&gt;4)-beta-glycosidic linkage between N-acetylmuramic acid (MurNAc) and N-acetylglucosamine (GlcNAc) residues in peptidoglycan, from either the reducing or the non-reducing ends of the peptidoglycan chains, with concomitant formation of a 1,6-anhydrobond in the MurNAc residue.. Functionally, murein-degrading enzyme that degrades murein glycan strands and insoluble, high-molecular weight murein sacculi, with the concomitant formation of a 1,6-anhydromuramoyl product. Lytic transglycosylases (LTs) play an integral role in the metabolism of the peptidoglycan (PG) sacculus. Their lytic action creates space within the PG sacculus to allow for its expansion as well as for the insertion of various structures such as secretion systems and flagella. The protein is Membrane-bound lytic murein transglycosylase F of Erwinia tasmaniensis (strain DSM 17950 / CFBP 7177 / CIP 109463 / NCPPB 4357 / Et1/99).